A 364-amino-acid chain; its full sequence is MANKTVLFHKHLESNAKMVDFHGWDMPLNYGSQIEEHHAVRQDAGMFDVSHMTVVDVTGQDARDFLRKLLANDVAKLTVPGKALYGGMLDDNAGVIDDLITYYLSDTHYRVVVNSATREKDLAWIAKQSAPFSVTITERPELAMIAVQGPNAKAKAATVFTPEQNSAVEGMKPFFGLQSGSLFIATTGYTGEAGYEIIVPEQDAEDLWQALLNTGVKPCGLGARDTLRLEAGMNLYGLDMDESINPLAANMGWTIAWEPSDRDFIGRAALTELKAQGTEKLVGLVMEEKGVLRHDMPVFFTDSDGVEQQGYITSGTFSPTLGYSIAMARVPAGIGAIAEVEMRKKRVAVKVIAPSFVRNGKQAF.

Belongs to the GcvT family. In terms of assembly, the glycine cleavage system is composed of four proteins: P, T, L and H.

The catalysed reaction is N(6)-[(R)-S(8)-aminomethyldihydrolipoyl]-L-lysyl-[protein] + (6S)-5,6,7,8-tetrahydrofolate = N(6)-[(R)-dihydrolipoyl]-L-lysyl-[protein] + (6R)-5,10-methylene-5,6,7,8-tetrahydrofolate + NH4(+). Functionally, the glycine cleavage system catalyzes the degradation of glycine. This Shewanella denitrificans (strain OS217 / ATCC BAA-1090 / DSM 15013) protein is Aminomethyltransferase.